A 634-amino-acid chain; its full sequence is MATSNNPRKFSEKIALHNQKQAEETAAFEEVMKDLSLTRAARLQLQKSQYLQLGPSRGQYYGGSLPNVNQIGSGTMDLPFQTPFQSSGLDTSRTTRHHGLVDRVYRERGRLGSPHRRPLSVDKHGRQADSCPYGTMYLSPPADTSWRRTNSDSALHQSTMTPTQPESFSSGSQDVHQKRVLLLTVPGMEETTSEADKNLSKQAWDTKKTGSRPKSCEVPGINIFPSADQENTTALIPATHNTGGSLPDLTNIHFPSPLPTPLDPEEPTFPALSSSSSTGNLAANLTHLGIGGAGQGMSTPGSSPQHRPAGVSPLSLSTEARRQQASPTLSPLSPITQAVAMDALSLEQQLPYAFFTQAGSQQPPPQPQPPPPPPPASQQPPPPPPPQAPVRLPPGGPLLPSASLTRGPQPPPLAVTVPSSLPQSPPENPGQPSMGIDIASAPALQQYRTSAGSPANQSPTSPVSNQGFSPGSSPQHTSTLGSVFGDAYYEQQMAARQANALSHQLEQFNMMENAISSSSLYSPGSTLNYSQAAMMGLTGSHGSLPDSQQLGYASHSGIPNIILTVTGESPPSLSKELTSSLAGVGDVSFDSDSQFPLDELKIDPLTLDGLHMLNDPDMVLADPATEDTFRMDRL.

2 positions are modified to phosphoserine: serine 64 and serine 113. Disordered regions lie at residues 110–174 (RLGS…GSQD), 191–221 (TTSEADKNLSKQAWDTKKTGSRPKSCEVPGI), 258–331 (LPTP…TLSP), and 357–479 (QAGS…HTST). At threonine 149 the chain carries Phosphothreonine. At serine 151 the chain carries Phosphoserine; by SIK1 and SIK2. Polar residues predominate over residues 151-174 (SDSALHQSTMTPTQPESFSSGSQD). Threonine 161 carries the phosphothreonine modification. Over residues 194–208 (EADKNLSKQAWDTKK) the composition is skewed to basic and acidic residues. Residues 242–258 (TGGSLPDLTNIHFPSPL) carry the Nuclear export signal motif. Composition is skewed to polar residues over residues 271–283 (ALSSSSSTGNLAA), 296–305 (GMSTPGSSPQ), and 314–331 (LSLSTEARRQQASPTLSP). Positions 362–397 (QPPPQPQPPPPPPPASQQPPPPPPPQAPVRLPPGGP) are enriched in pro residues. The segment covering 446–479 (QYRTSAGSPANQSPTSPVSNQGFSPGSSPQHTST) has biased composition (polar residues).

Belongs to the TORC family. Binds, as a tetramer, through its N-terminal region, with the bZIP domain of CREB1. 'Arg-314' in the bZIP domain of CREB1 is essential for this interaction. Interaction, via its C-terminal, with TAF4, enhances recruitment of TAF4 to CREB1. Interacts with 14-3-3 proteins, including YWHAE/14-3-3 epsilon. Interacts with calmodulin-dependent catalytic subunit PPP3CA/calcineurin A. In terms of assembly, (Microbial infection) Interacts with HTLV1 Tax. In terms of processing, phosphorylation/dephosphorylation states of Ser-151 are required for regulating transduction of CREB activity. TORCs are inactive when phosphorylated, and active when dephosphorylated at this site. This primary site of phosphorylation is mediated by SIKs (SIK1 and SIK2), is regulated by cAMP and calcium levels and is dependent on the phosphorylation of SIKs by LKB1. Highly expressed in adult and fetal brain. Located to specific regions such as the prefrontal cortex and cerebellum. Very low expression in other tissues such as heart, spleen, lung, skeletal muscle, salivary gland, ovary and kidney.

It localises to the cytoplasm. The protein localises to the nucleus. Its function is as follows. Transcriptional coactivator for CREB1 which activates transcription through both consensus and variant cAMP response element (CRE) sites. Acts as a coactivator, in the SIK/TORC signaling pathway, being active when dephosphorylated and acts independently of CREB1 'Ser-133' phosphorylation. Enhances the interaction of CREB1 with TAF4. Regulates the expression of specific CREB-activated genes such as the steroidogenic gene, StAR. Potent coactivator of PGC1alpha and inducer of mitochondrial biogenesis in muscle cells. In the hippocampus, involved in late-phase long-term potentiation (L-LTP) maintenance at the Schaffer collateral-CA1 synapses. May be required for dendritic growth of developing cortical neurons. In concert with SIK1, regulates the light-induced entrainment of the circadian clock. In response to light stimulus, coactivates the CREB-mediated transcription of PER1 which plays an important role in the photic entrainment of the circadian clock. (Microbial infection) Plays a role of coactivator for TAX activation of the human T-cell leukemia virus type 1 (HTLV-1) long terminal repeats (LTR). In Homo sapiens (Human), this protein is CREB-regulated transcription coactivator 1.